The primary structure comprises 666 residues: Nuclear distribution protein nudE homolog 1 (666 aa).

Positions E14–T195 form a coiled coil. 4 disordered regions span residues E40–A64, D220–P310, K369–H388, and D397–K666. Residues R251–H274 show a composition bias toward polar residues. 2 stretches are compositionally biased toward low complexity: residues S275 to S287 and T372 to T383. Polar residues predominate over residues T400–P410. Composition is skewed to low complexity over residues P449 to R465, A473 to A485, and S536 to N554. Polar residues-rich tracts occupy residues R587 to T599 and S614 to P638.

The protein belongs to the nudE family. In terms of assembly, self-associates. Interacts with PAC1.

The protein resides in the cytoplasm. The protein localises to the cytoskeleton. Its function is as follows. Required for nuclear migration. This chain is Nuclear distribution protein nudE homolog 1 (NDE1), found in Cryptococcus neoformans var. neoformans serotype D (strain B-3501A) (Filobasidiella neoformans).